Consider the following 408-residue polypeptide: Zinc chaperone AztD (408 aa).

The first 21 residues, 1–21 (MLRHLAGASALALTLAGAGFA), serve as a signal peptide directing secretion. The N-terminal Zn(2+)-binding motif; binds a third Zn(2+) with low affinity motif lies at 23–29 (DHDHDHE). Residues His99, His102, Asp104, His124, His167, His218, and His408 each contribute to the Zn(2+) site. Cys214 and Cys231 are joined by a disulfide.

As to quaternary structure, monomer.

The protein resides in the periplasm. Functionally, acts as a zinc chaperone in the AztABCD zinc transport system. Directly transfers one zinc cation to the solute binding protein AztC; the transfer occurs without the formation of a stable interaction. Binds 3 Zn(2+), two with high affinity and one with low affinity, and transfers only Zn(2+) bound to site 2 to AztC. Likely functions to store zinc in the periplasm and may be important for zinc accumulation in zinc-limited environments. This Paracoccus denitrificans (strain Pd 1222) protein is Zinc chaperone AztD.